Here is a 94-residue protein sequence, read N- to C-terminus: Acylphosphatase (94 aa).

An Acylphosphatase-like domain is found at 7 to 94; it reads AVRVRISGRV…NMPRDFRITG (88 aa). Active-site residues include Arg-22 and Asn-40.

It belongs to the acylphosphatase family.

It carries out the reaction an acyl phosphate + H2O = a carboxylate + phosphate + H(+). This Rhizobium etli (strain ATCC 51251 / DSM 11541 / JCM 21823 / NBRC 15573 / CFN 42) protein is Acylphosphatase (acyP).